The sequence spans 213 residues: Large ribosomal subunit protein uL1 (213 aa).

It belongs to the universal ribosomal protein uL1 family. As to quaternary structure, part of the 50S ribosomal subunit.

Binds directly to 23S rRNA. Probably involved in E site tRNA release. Functionally, protein L1 is also a translational repressor protein, it controls the translation of its operon by binding to its mRNA. The sequence is that of Large ribosomal subunit protein uL1 from Methanococcus maripaludis (strain C5 / ATCC BAA-1333).